Reading from the N-terminus, the 434-residue chain is D-inositol 3-phosphate glycosyltransferase (434 aa).

Histidine 19 serves as a coordination point for 1D-myo-inositol 3-phosphate. Residues 25 to 26 (QP) and glycine 33 contribute to the UDP-N-acetyl-alpha-D-glucosamine site. 1D-myo-inositol 3-phosphate-binding positions include 30–35 (DAGGMN), lysine 88, tyrosine 121, threonine 145, and arginine 165. Positions 239, 244, and 297 each coordinate UDP-N-acetyl-alpha-D-glucosamine. The Mg(2+) site is built by tyrosine 306, arginine 307, and alanine 309. UDP-N-acetyl-alpha-D-glucosamine is bound by residues glutamate 319 and glutamate 327. A Mg(2+)-binding site is contributed by threonine 333. A disordered region spans residues 414 to 434 (HPRPAARRSGRRFSMRRGVRT).

The protein belongs to the glycosyltransferase group 1 family. MshA subfamily. As to quaternary structure, homodimer.

The catalysed reaction is 1D-myo-inositol 3-phosphate + UDP-N-acetyl-alpha-D-glucosamine = 1D-myo-inositol 2-acetamido-2-deoxy-alpha-D-glucopyranoside 3-phosphate + UDP + H(+). Functionally, catalyzes the transfer of a N-acetyl-glucosamine moiety to 1D-myo-inositol 3-phosphate to produce 1D-myo-inositol 2-acetamido-2-deoxy-glucopyranoside 3-phosphate in the mycothiol biosynthesis pathway. In Mycolicibacterium smegmatis (strain ATCC 700084 / mc(2)155) (Mycobacterium smegmatis), this protein is D-inositol 3-phosphate glycosyltransferase (mshA).